The sequence spans 122 residues: Large ribosomal subunit protein uL14 (122 aa).

It belongs to the universal ribosomal protein uL14 family. Part of the 50S ribosomal subunit. Forms a cluster with proteins L3 and L19. In the 70S ribosome, L14 and L19 interact and together make contacts with the 16S rRNA in bridges B5 and B8.

Functionally, binds to 23S rRNA. Forms part of two intersubunit bridges in the 70S ribosome. The chain is Large ribosomal subunit protein uL14 from Allorhizobium ampelinum (strain ATCC BAA-846 / DSM 112012 / S4) (Agrobacterium vitis (strain S4)).